A 474-amino-acid polypeptide reads, in one-letter code: Cysteine--tRNA ligase (474 aa).

Cys29 serves as a coordination point for Zn(2+). A 'HIGH' region motif is present at residues 31-41; that stretch reads ATVQGEPHVGH. 3 residues coordinate Zn(2+): Cys211, His236, and Glu240. A 'KMSKS' region motif is present at residues 267–271; sequence KMSKS. Lys270 provides a ligand contact to ATP.

It belongs to the class-I aminoacyl-tRNA synthetase family. Monomer. The cofactor is Zn(2+).

The protein resides in the cytoplasm. It carries out the reaction tRNA(Cys) + L-cysteine + ATP = L-cysteinyl-tRNA(Cys) + AMP + diphosphate. The sequence is that of Cysteine--tRNA ligase from Beutenbergia cavernae (strain ATCC BAA-8 / DSM 12333 / CCUG 43141 / JCM 11478 / NBRC 16432 / NCIMB 13614 / HKI 0122).